Consider the following 5376-residue polypeptide: Zonadhesin (5376 aa).

An N-terminal signal peptide occupies residues 1-17; that stretch reads MALPVWTLMLLVGAAWG. The Extracellular portion of the chain corresponds to 18–5310; sequence QEQVPAWRPN…TTRKKIEASS (5293 aa). 3 consecutive MAM domains span residues 45 to 210, 215 to 374, and 377 to 542; these read SKCD…TCNQ, QMCT…PCGE, and PQCD…PCRV. N-linked (GlcNAc...) asparagine glycans are attached at residues Asn-339 and Asn-499. Positions 547 to 1170 are 80 X heptapeptide repeats (approximate) (mucin-like domain); that stretch reads EIPSSPLLPP…PTTGVSTTES (624 aa). Disordered stretches follow at residues 553–579 and 1037–1113; these read LLPP…TKAT and TVPP…TVST. Positions 1052-1113 are enriched in low complexity; sequence TEVTTTPPEE…IASEETTVST (62 aa). The TIL 1 domain occupies 1171-1220; that stretch reads CPPNAHIELCACPASCESPKPSCQPPCIPGCVCNPGFLFSNNQCINESSC. N-linked (GlcNAc...) asparagine glycans are attached at residues Asn-1216, Asn-1239, and Asn-1314. Residues 1227–1275 form the VWFC 1 domain; sequence KHYKPGEEWFTPNCTERCRCLPGSLMECQISQCGTHTVCQLKSDQYQCE. Residues 1280 to 1462 enclose the VWFD 1 domain; it reads ATCLVYGDLH…DKDWVSSRCQ (183 aa). 2 disulfides stabilise this stretch: Cys-1282-Cys-1417 and Cys-1304-Cys-1461. Residues 1555–1608 form the TIL 2 domain; that stretch reads CPKNSRYSLCAKPCPETCHPISTTQHCSDKCVEGCECDPGFILSGSECVPSSQC. Residues 1609–1664 form the VWFC 2 domain; it reads GCTSFQGRYFKLQEQWFNPDCKEICTCESHNHILCKPWKCKAQEACSYKNGVLGCH. In terms of domain architecture, VWFD 2 spans 1669–1849; the sequence is ATCMVSGDPH…ILEASDPGCF (181 aa). Intrachain disulfides connect Cys-1671/Cys-1809 and Cys-1693/Cys-1848. Residues Asn-1814, Asn-1908, and Asn-1933 are each glycosylated (N-linked (GlcNAc...) asparagine). The TIL 3 domain occupies 1941 to 1995; it reads CPPRSSYNPCANSCPATCLTLSTPRDCPTLPCVEGCECQSGHILSGTTCVPLRQC. A VWFC 3 domain is found at 1996–2052; the sequence is GCSDQDGSYHLLGESWYTEKTCTTLCTCSAHSNITCSPTACKANHVCLRQEGLLRCA. N-linked (GlcNAc...) asparagine glycosylation is found at Asn-2028, Asn-2111, Asn-2142, and Asn-2332. Positions 2056–2239 constitute a VWFD 3 domain; it reads GECRISEDSQ…KDKSMDPNCQ (184 aa). Intrachain disulfides connect Cys-2058–Cys-2200 and Cys-2080–Cys-2238. Residues 2340 to 2398 form the TIL 4 domain; the sequence is CPAHSHYTNCLPSCPPSCLDPDSRCEGSGHKVPATCREGCICQPDYVLLNDKCVLRSHC. Positions 2399–2454 constitute a VWFC 4 domain; that stretch reads GCKDAQGVFIPAGKTWISEDCTQSCTCMKGSMRCWDFQCPPGTYCKNSNDGSSNCV. The TIL 5 domain occupies 2460–2518; it reads CPAHSKFTDCLPPCHPSCSDPDGHCEGISTNAHSNCKEGCVCQPGYVLRNDKCVLRIEC. The 56-residue stretch at 2519–2574 folds into the VWFC 5 domain; that stretch reads GCQHTQGGFIPAGKNWTSRGCSQSCDCMEGVIRCQNFQCPSGTYCQDIEDGTSNCA. Asn-2533 and Asn-2575 each carry an N-linked (GlcNAc...) asparagine glycan. A TIL 6 domain is found at 2580 to 2638; it reads CPAHSSFTNCLPPCQPSCSDPEGHCGGSTTKAPSACQEGCVCEPDYVVLNNKCVPRIEC. Residues 2639–2694 form the VWFC 6 domain; that stretch reads GCKDAQGVLIPADKIWINKGCTQTCACVTGTIHCRDFQCPSGTYCKDIKDDASNCT. A glycan (N-linked (GlcNAc...) asparagine) is linked at Asn-2692. The TIL 7 domain maps to 2700-2758; sequence CPDHSLYTHCLPSCLLSCSDPDGLCRGTSPEAPSTCKEGCVCDPDYVLSNDKCVLRIEC. The region spanning 2759–2814 is the VWFC 7 domain; the sequence is GCKDAQGVLIPAGKTWINRGCTQSCSCMGGAIQCQNFKCPSEAYCQDMEDGNSNCT. Asn-2812 carries N-linked (GlcNAc...) asparagine glycosylation. A TIL 8 domain is found at 2820–2878; it reads CPAHSHYTNCLPTCQPSCSDPDGHCEGSSTKAPSACKEGCVCEPDYVMLNNKCVPRIEC. The 56-residue stretch at 2879 to 2934 folds into the VWFC 8 domain; the sequence is GCKDTQGVLIPADKTWINRGCTQSCTCRGGAIQCQKYHCSSGTYCKDMEDDSSSCA. A TIL 9 domain is found at 2940-2998; the sequence is CPAHSHFTNCLPPCQPSCLDSEGHCEGSTTKAPSACQEGCVCEPDYVVLNNKCVPRIEC. In terms of domain architecture, VWFC 9 spans 2999–3054; the sequence is GCKDAQGVLIPADKTWINRGCTQSCTCKGGAIQCQKFQCPSETYCKDIEDGNSNCT. N-linked (GlcNAc...) asparagine glycosylation is found at Asn-3052, Asn-3065, Asn-3144, and Asn-3172. A TIL 10 domain is found at 3060–3118; sequence CPANSNFTSCLPSCQPSCSNTDVHCEGSSPNTLSSCREGCVCQSGYVLHNDKCILRNQC. Residues 3119-3174 form the VWFC 10 domain; that stretch reads GCKDAQGALIPEGKTWITSGCTQSCNCTGGAIQCQNFQCPLKTYCKDLKDGSSNCT. Residues 3180–3238 enclose the TIL 11 domain; the sequence is CPAHSRYTNCLPSCPPLCLDPEGLCEGTSPKVPSTCREGCICQPGYLMHKNKCVLRIFC. Positions 3239-3294 constitute a VWFC 11 domain; the sequence is GCKNTQGAFISADKTWISRGCTQSCTCPAGAIHCRNFKCPSGTYCKNGDNGSSNCT. 2 N-linked (GlcNAc...) asparagine glycosylation sites follow: Asn-3288 and Asn-3292. The region spanning 3300–3355 is the TIL 12 domain; that stretch reads CPTNSQFTDCLPSCVPSCSNRCEVTSPSVPSSCREGCLCNHGFVFSEDKCVPRTQC. The VWFC 12 domain occupies 3356 to 3411; the sequence is GCKDARGAIIPAGKTWTSKGCTQSCACVEGNIQCQNFQCPPETYCKDNSEGSSTCT. In terms of domain architecture, TIL 13 spans 3417-3475; the sequence is CPAHTQYTSCLPSCLPSCLDPEGLCKDISPKVPSTCKEGCVCQSGYVLNSDKCVLRAEC. The 56-residue stretch at 3476 to 3531 folds into the VWFC 13 domain; the sequence is DCKDAQGALIPAGKTWTSPGCTQSCACMGGAVQCQSSQCPPGTYCKDNEDGNSNCA. The 59-residue stretch at 3537-3595 folds into the TIL 14 domain; that stretch reads CPAHSLFTNCLPPCLPSCLDPDGLCKGASPKVPSTCKEGCICQSGYVLSNNKCLLRNRC. In terms of domain architecture, VWFC 14 spans 3596–3651; the sequence is GCKDAHGALIPEDKTWVSRGCTQSCVCTGGSIQCLSSQCPPGAYCKDNEDGSSNCA. A TIL 15 domain is found at 3657 to 3715; the sequence is CPANSHYTDCFPPCPPSCSDPEGHCEASGPRVLSTCREGCLCNPGFVLDRDKCVPRVEC. A VWFC 15 domain is found at 3716–3771; sequence GCKDAQGALIPSGKTWTSPGCTQSCACMGGVVQCQSSQCPPGTYCKDNEDGNSNCA. One can recognise a TIL 16 domain in the interval 3777 to 3835; that stretch reads CPTHSNYTDCLPFCLPSCLDPSALCGGTSPKGPSTCKEGCVCQPGYVLDKDKCILKIEC. Residue Asn-3782 is glycosylated (N-linked (GlcNAc...) asparagine). One can recognise a VWFC 16 domain in the interval 3836–3891; sequence GCRDTQGAVIPAGKTWLSTGCIQSCACVEGTIQCQNFQCPPGTYCNHNNNCAKIPL. Residues 3893 to 3951 form the TIL 17 domain; the sequence is CPAHSHFTSCLPSCPPSCANLDGSCEQTSPKVPSTCKEGCLCQPGYFLNNGKCVLQTHC. In terms of domain architecture, VWFC 17 spans 3952–4007; sequence DCKDAEGGLVPAGKTWTSKDCTQSCACTGGAVQCQNFQCPLGTYCKDSGDGSSNCT. The N-linked (GlcNAc...) asparagine glycan is linked to Asn-4005. The region spanning 4029-4087 is the TIL 18 domain; it reads CPAHSHFTSCLPSCPPSCSNLDGSCVESNFKAPSVCKKGCICQPGYLLNNDKCVLRIQC. The VWFC 18 domain occupies 4088 to 4143; that stretch reads GCKDTQGGLIPAGRTWISSDCTKSCSCMGGIIQCRDFQCPPGTYCKESNDSSRTCA. Asn-4136 is a glycosylation site (N-linked (GlcNAc...) asparagine). The 59-residue stretch at 4149 to 4207 folds into the TIL 19 domain; sequence CPAHSHYTNCLPACSRSCTDLDGHCEGTSPKVPSPCKEGCLCQPGYVVHNHKCVLQIHC. The region spanning 4208-4262 is the VWFC 19 domain; the sequence is GCKDAQGGFVPAGKTWISRGCTQSCACVGGAVQCHNFTCPTGTQCQNSSCSKITV. Asn-4243 and Asn-4254 each carry an N-linked (GlcNAc...) asparagine glycan. Residues 4264–4322 enclose the TIL 20 domain; the sequence is CPAHSQYTTCLPSCLPSCFDPEGLCGGASPRAPSTCREGCVCEADYVLREDKCVLRTQC. One can recognise a VWFC 20 domain in the interval 4323-4378; sequence GCKDAQGDLIPANKTWLTRGCAQKCTCKGGNIHCWNFKCPLGTECKDSVDGGSNCT. Asn-4335 and Asn-4376 each carry an N-linked (GlcNAc...) asparagine glycan. A TIL 21 domain is found at 4384–4442; sequence CPAHSHHTYCLPSCIPSCSNVNDRCESTSLQRPSTCIEGCLCHSGFVFSKDKCVPRTQC. The VWFC 21 domain occupies 4443 to 4498; it reads GCKDSQGTLIPAGKNWITTGCSQRCTCTGGLVQCHDFQCPSGAECQDIEDGNSNCV. The TIL 22 domain occupies 4504-4562; the sequence is CPAHSHYSKCLPPCQPSCSDPDGHCEGTSPEAPSTCEEGCVCEPDYVLSNDKCVPSSEC. The VWFC 22 domain maps to 4563–4618; that stretch reads GCKDAHGVLIPESKTWVSRGCTKNCTCKGGTVQCHDFSCPTGSRCLDNNEGNSNCV. Asn-4586 carries an N-linked (GlcNAc...) asparagine glycan. In terms of domain architecture, TIL 23 spans 4624–4682; it reads CPAHSLYTNCLPSCLPSCSDPEGLCGGTSPEVPSTCKEGCICQSGYVLHKNKCMLRIHC. In terms of domain architecture, VWFC 23 spans 4683 to 4738; the sequence is DCKDFQGSLIKTGQTWISSGCSKICTCKGGFFQCQSYKCPSGTQCEESEDGSSNCV. The TIL 24 domain occupies 4744 to 4802; the sequence is CPANSLYTHCLPTCLPSCSNPDGRCEGTSHKAPSTCREGCVCQPGYLLNKDTCVHKNQC. In terms of domain architecture, VWFC 24 spans 4803–4858; the sequence is GCKDIRGNIIPAGNTWISSDCTQSCACTDGVIQCQNFVCPSGSHCQYNEDGSSDCA. Residues 4863 to 5038 form the VWFD 4 domain; sequence ERCTIFGDPY…SWEVKAQHAF (176 aa). An intrachain disulfide couples Cys-4865 to Cys-5001. N-linked (GlcNAc...) asparagine glycosylation is present at Asn-5136. The TIL 25 domain occupies 5150 to 5203; the sequence is CPANTVYQRCMTPCPASCAKFVTPKVCEGPCVEGCASLPGYIYSDTQSLPVTHC. A VWFC 25 domain is found at 5204-5258; sequence GCTADGIYYKLGDSFVTNDCSQHCTCASQGILLCEPYGCRAGESCMVANFTRGCF. A glycan (N-linked (GlcNAc...) asparagine) is linked at Asn-5252. One can recognise an EGF-like domain in the interval 5259-5295; that stretch reads QDSPCLQNPCHNDGRCEEQGATFICHCDFGYGGEFCT. 3 disulfides stabilise this stretch: Cys-5263/Cys-5274, Cys-5268/Cys-5283, and Cys-5285/Cys-5294. A helical transmembrane segment spans residues 5311 to 5337; it reads LVAILPGVLVMVLVPVLLPRVYVYMAT. Residues 5338-5376 lie on the Cytoplasmic side of the membrane; the sequence is RTTMGRRRMKRKEKKLLRQSRLRLEDADVPEPTFKATEF.

Probably forms covalent oligomers. In testis, primarily in haploid spermatids.

The protein resides in the cell membrane. Functionally, binds in a species-specific manner to the zona pellucida of the egg. May be involved in gamete recognition and/or signaling. The protein is Zonadhesin (Zan) of Mus musculus (Mouse).